A 617-amino-acid chain; its full sequence is Protein fem-1 homolog C (617 aa).

N-acetylmethionine is present on Met-1. ANK repeat units follow at residues 2–31, 40–70, 82–111, 115–144, 148–177, 181–210, and 213–242; these read DLKTAVFNAARDGKLRLLTKLLASKSKEEV, NGATPLLMAARYGHLDMVEFLLEQCSASIEV, EGAPPLWAASAAGHLKVVQSLLNHGASVNN, TNSTPLRAACFDGHLEIVKYLVEHKADLEV, HGHTCLMISCYKGHKEIAQYLLEKGADVNR, KGNTALHDCAESGSLDIMKMLLMYCAKMEK, and YGMTPLLSASVTGHTNIVDFLTHHAQTSKT. TPR repeat units lie at residues 245–279 and 338–371; these read INALELLGATFVDKKRDLLGALKYWKKAMNMRYSD and SYYIRYRGAVYADSGNFKRCINLWKYALDMQQNN. ANK repeat units lie at residues 481-523 and 527-556; these read NNFS…DVNV and DDNSPLHIAALNNHPDIMNLLIKSGAHFDA.

This sequence belongs to the fem-1 family. In terms of assembly, component of a CRL2 E3 ubiquitin-protein ligase complex, also named ECS (Elongin BC-CUL2/5-SOCS-box protein) complex, composed of CUL2, Elongin BC (ELOB and ELOC), RBX1 and substrate-specific adapter FEM1C.

Its pathway is protein modification; protein ubiquitination. Substrate-recognition component of a Cul2-RING (CRL2) E3 ubiquitin-protein ligase complex of the DesCEND (destruction via C-end degrons) pathway, which recognizes a C-degron located at the extreme C terminus of target proteins, leading to their ubiquitination and degradation. The C-degron recognized by the DesCEND pathway is usually a motif of less than ten residues and can be present in full-length proteins, truncated proteins or proteolytically cleaved forms. The CRL2(FEM1C) complex specifically recognizes proteins with an arginine at the C-terminus: recognizes and binds proteins ending with -Lys/Arg-Xaa-Arg and -Lys/Arg-Xaa-Xaa-Arg C-degrons, such as SIL1 or OR51B2, leading to their ubiquitination and degradation. The CRL2(FEM1C) complex mediates ubiquitination and degradation of truncated MSRB1/SEPX1 selenoproteins produced by failed UGA/Sec decoding. This is Protein fem-1 homolog C from Bos taurus (Bovine).